We begin with the raw amino-acid sequence, 219 residues long: MEWAYYGSGYSSSGTPSPVGGDGDEDSYMTVSSAPPKRRAGRTKFKETRHPVYKGVRSRNPGRWVCEVREPHGKQRIWLGTFETAEMAARAHDVAAMALRGRAACLNFADSPRRLRVPPLGAGHEEIRRAAVEAAELFRPAPGQHNAAAEAAAAVAAQATAASAELFADFPCYPMDGLEFEMQGYLDMAQGMLIEPPPLAGQSTWAEEDYDCEVNLWSY.

A compositionally biased stretch (low complexity) spans 1-19 (MEWAYYGSGYSSSGTPSPV). The segment at 1–44 (MEWAYYGSGYSSSGTPSPVGGDGDEDSYMTVSSAPPKRRAGRTK) is disordered. The AP2/ERF DNA-binding region spans 52-109 (VYKGVRSRNPGRWVCEVREPHGKQRIWLGTFETAEMAARAHDVAAMALRGRAACLNFA).

The protein belongs to the AP2/ERF transcription factor family. ERF subfamily.

The protein localises to the nucleus. Transcriptional activator that binds specifically to the DNA sequence 5'-[AG]CCGAC-3'. Binding to the C-repeat/DRE element mediates high salinity- and dehydration-inducible transcription. The sequence is that of Dehydration-responsive element-binding protein 1E (DREB1E) from Oryza sativa subsp. indica (Rice).